The sequence spans 137 residues: UPF0768 protein C1952.04c (137 aa).

Residues 79–93 (QRRRREDLPTPERPE) show a composition bias toward basic and acidic residues. Positions 79–137 (QRRRREDLPTPERPEASAQQHAFFPGSSSQQTDIPNVRPQPHIPPPRKSDEAPPPYSYK) are disordered. Residues 119–137 (PHIPPPRKSDEAPPPYSYK) are compositionally biased toward pro residues.

This sequence belongs to the UPF0768 family.

The sequence is that of UPF0768 protein C1952.04c from Schizosaccharomyces pombe (strain 972 / ATCC 24843) (Fission yeast).